An 861-amino-acid polypeptide reads, in one-letter code: Origin recognition complex subunit 1 (861 aa).

In terms of domain architecture, BAH spans 45-171; that stretch reads IHIQIGQFVL…EKKFRPLSSE (127 aa). Positions 183–233 are disordered; sequence AAKCQKPVRAKSKSAESPSWTPAEHVAKRIESRHSASKSRQTPTHPLTPRA. Serine 199 is modified (phosphoserine). Phosphothreonine is present on threonine 203. Basic and acidic residues predominate over residues 207–216; the sequence is HVAKRIESRH. Residues serine 252, serine 255, serine 273, and serine 287 each carry the phosphoserine modification. The segment at 269-312 is disordered; that stretch reads SEITSPSKRSQPDKLQTLSPALKAPEKTRETGLSYTEDDKKASP. The segment covering 270–287 has biased composition (polar residues); it reads EITSPSKRSQPDKLQTLS. Lysine 326 is modified (N6-acetyllysine). Position 337 is a phosphothreonine (threonine 337). At serine 340 the chain carries Phosphoserine. Disordered regions lie at residues 360–382 and 412–476; these read KRDA…IRRK and PAAE…QIRS. Serine 417 and serine 420 each carry phosphoserine. The span at 440 to 456 shows a compositional bias: low complexity; it reads SRNLRSSLKSSLHTLTK. The span at 457 to 466 shows a compositional bias: basic residues; that stretch reads VPKKSLKPRT. Serine 478 is subject to Phosphoserine. ATP is bound by residues valine 500 and 534-542; that span reads GVPGTGKTA. The interval 501–861 is necessary and sufficient for ORC complex assembly; sequence PESLPCREQE…DDVLYALKDE (361 aa). Positions 620 and 621 each coordinate Mg(2+). Glutamate 621, asparagine 654, and arginine 720 together coordinate ATP.

Belongs to the ORC1 family. As to quaternary structure, component of ORC, a complex composed of at least 6 subunits: ORC1, ORC2, ORC3, ORC4, ORC5 and ORC6. ORC is regulated in a cell-cycle dependent manner. It is sequentially assembled at the exit from anaphase of mitosis and disassembled as cells enter S phase. Interacts with CDC6 and KAT7/HBO1. Interacts with LRWD1 predominantly during the G1 phase and with less affinity during mitosis, when phosphorylated. Post-translationally, phosphorylated during mitosis.

It is found in the nucleus. Functionally, component of the origin recognition complex (ORC) that binds origins of replication. DNA-binding is ATP-dependent. The DNA sequences that define origins of replication have not been identified yet. ORC is required to assemble the pre-replication complex necessary to initiate DNA replication. The polypeptide is Origin recognition complex subunit 1 (ORC1) (Homo sapiens (Human)).